The following is a 255-amino-acid chain: 3-deoxy-manno-octulosonate cytidylyltransferase (255 aa).

Belongs to the KdsB family.

Its subcellular location is the cytoplasm. It carries out the reaction 3-deoxy-alpha-D-manno-oct-2-ulosonate + CTP = CMP-3-deoxy-beta-D-manno-octulosonate + diphosphate. Its pathway is nucleotide-sugar biosynthesis; CMP-3-deoxy-D-manno-octulosonate biosynthesis; CMP-3-deoxy-D-manno-octulosonate from 3-deoxy-D-manno-octulosonate and CTP: step 1/1. It participates in bacterial outer membrane biogenesis; lipopolysaccharide biosynthesis. Functionally, activates KDO (a required 8-carbon sugar) for incorporation into bacterial lipopolysaccharide in Gram-negative bacteria. This is 3-deoxy-manno-octulosonate cytidylyltransferase from Polaromonas sp. (strain JS666 / ATCC BAA-500).